The following is a 415-amino-acid chain: Serine hydroxymethyltransferase (415 aa).

(6S)-5,6,7,8-tetrahydrofolate contacts are provided by residues L117 and 121 to 123 (GHL). Position 226 is an N6-(pyridoxal phosphate)lysine (K226).

Belongs to the SHMT family. In terms of assembly, homodimer. The cofactor is pyridoxal 5'-phosphate.

Its subcellular location is the cytoplasm. It catalyses the reaction (6R)-5,10-methylene-5,6,7,8-tetrahydrofolate + glycine + H2O = (6S)-5,6,7,8-tetrahydrofolate + L-serine. Its pathway is one-carbon metabolism; tetrahydrofolate interconversion. It functions in the pathway amino-acid biosynthesis; glycine biosynthesis; glycine from L-serine: step 1/1. Its function is as follows. Catalyzes the reversible interconversion of serine and glycine with tetrahydrofolate (THF) serving as the one-carbon carrier. This reaction serves as the major source of one-carbon groups required for the biosynthesis of purines, thymidylate, methionine, and other important biomolecules. Also exhibits THF-independent aldolase activity toward beta-hydroxyamino acids, producing glycine and aldehydes, via a retro-aldol mechanism. The protein is Serine hydroxymethyltransferase of Leptospira interrogans serogroup Icterohaemorrhagiae serovar copenhageni (strain Fiocruz L1-130).